The sequence spans 379 residues: Heterogeneous nuclear ribonucleoprotein A3 (379 aa).

Met-1 is modified (N-acetylmethionine). Positions 1–10 (MEVKPPPGRP) are enriched in pro residues. Positions 1 to 34 (MEVKPPPGRPQPDSGRRRRRRGEEGHDPKEPEQL) are disordered. Lys-4 is covalently cross-linked (Glycyl lysine isopeptide (Lys-Gly) (interchain with G-Cter in SUMO2)). Ser-14 is subject to Phosphoserine. Positions 21-34 (RGEEGHDPKEPEQL) are enriched in basic and acidic residues. The region spanning 35 to 118 (RKLFIGGLSF…RAVSREDSVK (84 aa)) is the RRM 1 domain. Lys-36 participates in a covalent cross-link: Glycyl lysine isopeptide (Lys-Gly) (interchain with G-Cter in SUMO2). Position 43 is a phosphoserine (Ser-43). Position 52 is a dimethylated arginine; alternate (Arg-52). At Arg-52 the chain carries Omega-N-methylarginine; alternate. Arg-76 carries the post-translational modification Omega-N-methylarginine. A phosphoserine mark is found at Ser-112 and Ser-116. A Glycyl lysine isopeptide (Lys-Gly) (interchain with G-Cter in SUMO2) cross-link involves residue Lys-118. Thr-124 is modified (phosphothreonine). Positions 126–205 (KKIFVGGIKE…CEVKKALSKQ (80 aa)) constitute an RRM 2 domain. Lys-134 is subject to N6-acetyllysine; alternate. Lys-134 participates in a covalent cross-link: Glycyl lysine isopeptide (Lys-Gly) (interchain with G-Cter in SUMO2); alternate. Residues Lys-151 and Lys-182 each participate in a glycyl lysine isopeptide (Lys-Gly) (interchain with G-Cter in SUMO2) cross-link. A disordered region spans residues 204-225 (KQEMQSAGSQRGRGGGSGNFMG). An omega-N-methylarginine; alternate mark is found at Arg-214, Arg-216, Arg-226, Arg-239, and Arg-246. Arg-214, Arg-216, Arg-226, Arg-239, and Arg-246 each carry asymmetric dimethylarginine; alternate. Positions 214-225 (RGRGGGSGNFMG) are enriched in gly residues. At Arg-257 the chain carries Omega-N-methylarginine. Residue Arg-286 is modified to Asymmetric dimethylarginine. Residues 335 to 379 (NYSGQQQSNYGPMKGGSFGGRSSGSPYGGGYGSGGGSGGYGSRRF) are disordered. The span at 347–379 (MKGGSFGGRSSGSPYGGGYGSGGGSGGYGSRRF) shows a compositional bias: gly residues. Residue Ser-351 is modified to Phosphoserine. The residue at position 355 (Arg-355) is an Omega-N-methylarginine. Ser-359 is modified (phosphoserine). A phosphotyrosine mark is found at Tyr-361 and Tyr-365. Phosphoserine is present on residues Ser-367 and Ser-371. A Phosphotyrosine modification is found at Tyr-374. The residue at position 376 (Ser-376) is a Phosphoserine.

In terms of assembly, identified in the spliceosome C complex.

The protein localises to the nucleus. Plays a role in cytoplasmic trafficking of RNA. Binds to the cis-acting response element, A2RE. May be involved in pre-mRNA splicing. The sequence is that of Heterogeneous nuclear ribonucleoprotein A3 (Hnrnpa3) from Mus musculus (Mouse).